The chain runs to 100 residues: Large ribosomal subunit protein uL23 (100 aa).

It belongs to the universal ribosomal protein uL23 family. Part of the 50S ribosomal subunit. Contacts protein L29, and trigger factor when it is bound to the ribosome.

Its function is as follows. One of the early assembly proteins it binds 23S rRNA. One of the proteins that surrounds the polypeptide exit tunnel on the outside of the ribosome. Forms the main docking site for trigger factor binding to the ribosome. In Salmonella paratyphi A (strain ATCC 9150 / SARB42), this protein is Large ribosomal subunit protein uL23.